Reading from the N-terminus, the 277-residue chain is Putative phosphoenolpyruvate synthase regulatory protein (277 aa).

157–164 (GVSRSGKT) serves as a coordination point for ADP.

This sequence belongs to the pyruvate, phosphate/water dikinase regulatory protein family. PSRP subfamily.

It carries out the reaction [pyruvate, water dikinase] + ADP = [pyruvate, water dikinase]-phosphate + AMP + H(+). The enzyme catalyses [pyruvate, water dikinase]-phosphate + phosphate + H(+) = [pyruvate, water dikinase] + diphosphate. Its function is as follows. Bifunctional serine/threonine kinase and phosphorylase involved in the regulation of the phosphoenolpyruvate synthase (PEPS) by catalyzing its phosphorylation/dephosphorylation. In Azoarcus sp. (strain BH72), this protein is Putative phosphoenolpyruvate synthase regulatory protein.